The primary structure comprises 104 residues: Small ribosomal subunit protein uS10 (104 aa).

Belongs to the universal ribosomal protein uS10 family. In terms of assembly, part of the 30S ribosomal subunit.

Functionally, involved in the binding of tRNA to the ribosomes. In Xanthomonas oryzae pv. oryzae (strain MAFF 311018), this protein is Small ribosomal subunit protein uS10.